The following is a 317-amino-acid chain: Lysosomal-associated transmembrane protein 4B (317 aa).

Positions 25–73 (AFGAKGTDPAEARSSRGIEEAGPRAHGRAGREPERRRSRQQRRGGLQAR) are disordered. A compositionally biased stretch (basic and acidic residues) spans 32 to 59 (DPAEARSSRGIEEAGPRAHGRAGREPER). 4 helical membrane passes run 117-137 (ILLG…LLSA), 163-183 (MCIA…ATYG), 191-211 (WIIP…LVAI), and 244-264 (CLVL…GYLI). The tract at residues 205-221 (LNMLVAITVLIYPNSIQ) is required for NEDD4 interaction.

The protein belongs to the LAPTM4/LAPTM5 transporter family. Homooligomer; upon reaching the lysosomes. Interacts with MCOLN1. Interacts with NEDD4; may play a role in the lysosomal sorting of LAPTM4B; enhances HGS association with NEDD4; mediates inhibition of EGFR degradation. Interacts with PIP5K1C; promotes SNX5 association with LAPTM4B; kinase activity of PIP5K1C is required; interaction is regulated by phosphatidylinositol 4,5-bisphosphate generated by PIP5K1C. Interacts with HGS; promotes HGS ubiquitination. Interacts with SNX5. Interacts with SLC3A2 and SLC7A5; recruits SLC3A2 and SLC7A5 to lysosomes to promote leucine uptake into these organelles and is required for mTORC1 activation. Interacts with LRRC32; decreases TGFB1 production in regulatory T cells. Interacts with BECN1; competes with EGFR for LAPTM4B binding; regulates EGFR activity. Interacts with EGFR; positively correlates with EGFR activation. Undergoes proteolytic cleavage following delivery to the lysosomes. In terms of processing, ubiquitinated by NEDD4.

The protein localises to the endomembrane system. Its subcellular location is the late endosome membrane. It localises to the cell membrane. The protein resides in the cell projection. It is found in the lysosome membrane. The protein localises to the endosome membrane. Its subcellular location is the endosome. It localises to the multivesicular body membrane. The protein resides in the multivesicular body lumen. Functionally, required for optimal lysosomal function. Blocks EGF-stimulated EGFR intraluminal sorting and degradation. Conversely by binding with the phosphatidylinositol 4,5-bisphosphate, regulates its PIP5K1C interaction, inhibits HGS ubiquitination and relieves LAPTM4B inhibition of EGFR degradation. Recruits SLC3A2 and SLC7A5 (the Leu transporter) to the lysosome, promoting entry of leucine and other essential amino acid (EAA) into the lysosome, stimulating activation of proton-transporting vacuolar (V)-ATPase protein pump (V-ATPase) and hence mTORC1 activation. Plays a role as negative regulator of TGFB1 production in regulatory T cells. Binds ceramide and facilitates its exit from late endosome in order to control cell death pathways. The polypeptide is Lysosomal-associated transmembrane protein 4B (Homo sapiens (Human)).